The following is a 386-amino-acid chain: Glutamate 5-kinase (386 aa).

ATP is bound at residue Lys28. Substrate is bound by residues Ser68, Asp155, and Asn167. 187–188 contacts ATP; sequence TD. A PUA domain is found at 294 to 372; that stretch reads RGRLVLDDGA…EKIESILGYI (79 aa).

It belongs to the glutamate 5-kinase family.

Its subcellular location is the cytoplasm. The enzyme catalyses L-glutamate + ATP = L-glutamyl 5-phosphate + ADP. It functions in the pathway amino-acid biosynthesis; L-proline biosynthesis; L-glutamate 5-semialdehyde from L-glutamate: step 1/2. Its function is as follows. Catalyzes the transfer of a phosphate group to glutamate to form L-glutamate 5-phosphate. In Hahella chejuensis (strain KCTC 2396), this protein is Glutamate 5-kinase.